Reading from the N-terminus, the 446-residue chain is Glutamine synthetase (446 aa).

A GS beta-grasp domain is found at 18 to 103 (ENVRYLRLQF…LICDVYKTDG (86 aa)). A GS catalytic domain is found at 110–446 (PRANLKRVLK…WERDQYMKQY (337 aa)). Mg(2+) contacts are provided by glutamate 134 and glutamate 136. Glutamate 186 provides a ligand contact to ATP. Residues glutamate 191 and glutamate 198 each coordinate Mg(2+). L-glutamate is bound by residues 242 to 243 (NG) and glycine 243. Residue histidine 247 coordinates Mg(2+). Serine 251 provides a ligand contact to ATP. Arginine 300, glutamate 306, and arginine 318 together coordinate L-glutamate. Positions 318 and 323 each coordinate ATP. Glutamate 335 lines the Mg(2+) pocket. Arginine 337 is a binding site for L-glutamate.

It belongs to the glutamine synthetase family. As to quaternary structure, oligomer of 12 subunits arranged in the form of two hexagons. In its feedback-inhibited form, interacts with TnrA in order to block its DNA-binding activity. Mg(2+) serves as cofactor.

The protein resides in the cytoplasm. The catalysed reaction is L-glutamate + NH4(+) + ATP = L-glutamine + ADP + phosphate + H(+). Inhibited by glutamine. In terms of biological role, glutamine synthetase (GS) is an unusual multitasking protein that functions as an enzyme, a transcription coregulator, and a chaperone in ammonium assimilation and in the regulation of genes involved in nitrogen metabolism. It catalyzes the ATP-dependent biosynthesis of glutamine from glutamate and ammonia. Feedback-inhibited GlnA also interacts with and regulates the activity of the transcriptional regulator TnrA. During nitrogen limitation, TnrA is in its DNA-binding active state and turns on the transcription of genes required for nitrogen assimilation. Under conditions of nitrogen excess, feedback-inhibited GlnA forms a stable complex with TnrA, which inhibits its DNA-binding activity. In contrast, feedback-inhibited GlnA acts as a chaperone to stabilize the DNA-binding activity of GlnR, which represses the transcription of nitrogen assimilation genes. The protein is Glutamine synthetase of Staphylococcus aureus (strain MRSA252).